The following is a 360-amino-acid chain: Isocitrate dehydrogenase [NAD] subunit 1, mitochondrial (360 aa).

Residues 1–11 constitute a mitochondrion transit peptide; that stretch reads MLNRTIAKRTL. Positions 109, 140, and 228 each coordinate substrate. Aspartate 228 provides a ligand contact to Mg(2+).

Belongs to the isocitrate and isopropylmalate dehydrogenases family. In terms of assembly, octamer of two non-identical subunits IDH1 and IDH2. Requires Mg(2+) as cofactor. Mn(2+) serves as cofactor.

It is found in the mitochondrion. It catalyses the reaction D-threo-isocitrate + NAD(+) = 2-oxoglutarate + CO2 + NADH. With respect to regulation, allosterically regulated by several compounds including AMP, NAD(+), and citrate. Functionally, performs an essential role in the oxidative function of the citric acid cycle. Also binds RNA; specifically to the 5'-untranslated leaders of mitochondrial mRNAs. The protein is Isocitrate dehydrogenase [NAD] subunit 1, mitochondrial (IDH1) of Saccharomyces cerevisiae (strain ATCC 204508 / S288c) (Baker's yeast).